The chain runs to 161 residues: Lectin-like protein EP153R (161 aa).

Topologically, residues 1 to 30 are cytoplasmic; that stretch reads MFSNKKYIGLIDKYCEKKILDDSSTIKICY. A helical transmembrane segment spans residues 31–51; it reads ILIGILIGTNMITLIYNFIFW. Over 52 to 161 the chain is Extracellular; the sequence is ENYITCNQKD…HVSLLYICSK (110 aa). A disulfide bridge connects residues Cys66 and Cys77. The lectin-like stretch occupies residues 66-160; sequence CPKDWVGYNN…KHVSLLYICS (95 aa). Residues Asn89, Asn98, Asn104, Asn110, Asn116, Asn130, and Asn136 are each glycosylated (N-linked (GlcNAc...) asparagine; by host). Cys94 and Cys159 are oxidised to a cystine.

It belongs to the asfivirus lectin-like protein family. As to quaternary structure, homodimer.

The protein resides in the host endoplasmic reticulum membrane. Functionally, down-regulates MHC-I expression by impairing the appropriate configuration or presentation into the plasma membrane of the latter. Participates in viral hemadsorption, which may help viral spread. Reduces the transactivating activity of host TP53, thus inhibiting apoptosis. Non-essential for virus growth in swine macrophage cell cultures. The chain is Lectin-like protein EP153R from African swine fever virus (isolate Tick/Malawi/Lil 20-1/1983) (ASFV).